The chain runs to 678 residues: ABC transporter F family member 2 (678 aa).

ABC transporter domains lie at 84-342 and 411-626; these read VRLE…EAQY and VTVK…AREL. ATP is bound by residues 116–123 and 443–450; these read GVNGAGKT and GPNGCGKS. The tract at residues 630 to 678 is disordered; sequence AELEEKAPKVKAKSKMSKAEREARKKQKMKAFQASKKKSKSSKNAKRWN. Basic residues predominate over residues 653–678; it reads RKKQKMKAFQASKKKSKSSKNAKRWN.

This sequence belongs to the ABC transporter superfamily. ABCF family. EF3 (TC 3.A.1.121) subfamily.

In Arabidopsis thaliana (Mouse-ear cress), this protein is ABC transporter F family member 2 (ABCF2).